The primary structure comprises 727 residues: Alpha-1,3-galactosidase A (727 aa).

Residues Ala220 to Pro241 form a disordered region. A compositionally biased stretch (polar residues) spans Thr221 to Pro230. PbH1 repeat units follow at residues Lys336–Gly358, Thr461–Thr483, Arg484–Ser506, Val517–Asp538, His551–Arg572, and Val574–Asp603.

Belongs to the glycosyl hydrolase 110 family. A subfamily.

The enzyme catalyses Hydrolysis of terminal, non-reducing branched (1-&gt;3)-alpha-D-galactosidic residues, producing free D-galactose.. The catalysed reaction is Hydrolysis of terminal, non-reducing alpha-D-galactose residues in alpha-D-galactosides, including galactose oligosaccharides, galactomannans and galactolipids.. Functionally, alpha-galactosidase that specifically removes branched alpha-1,3-linked galactose residues present in blood group B antigens. Has no activity toward linear alpha-1,3-linked galactose residues. The chain is Alpha-1,3-galactosidase A (glaA) from Peterkaempfera griseoplana (Streptacidiphilus griseoplanus).